Reading from the N-terminus, the 64-residue chain is Peptide Ctri9677 (64 aa).

A signal peptide spans Met-1–Ala-22. Leu-36 is subject to Leucine amide. Residues Ser-40–Tyr-64 constitute a propeptide that is removed on maturation.

The protein belongs to the non-disulfide-bridged peptide (NDBP) superfamily. Short antimicrobial peptide (group 4) family. Expressed by the venom gland.

It localises to the secreted. Functionally, antimicrobial peptide. The sequence is that of Peptide Ctri9677 from Chaerilus tricostatus (Scorpion).